Here is a 432-residue protein sequence, read N- to C-terminus: Adenylosuccinate synthetase (432 aa).

GTP contacts are provided by residues G12–K18 and G40–T42. Residue D13 is the Proton acceptor of the active site. 2 residues coordinate Mg(2+): D13 and G40. IMP contacts are provided by residues D13 to K16, N38 to H41, T130, R144, Q225, T240, and R304. H41 (proton donor) is an active-site residue. A300–R306 lines the substrate pocket. GTP-binding positions include R306, K332–D334, and S415–G417.

Belongs to the adenylosuccinate synthetase family. As to quaternary structure, homodimer. It depends on Mg(2+) as a cofactor.

Its subcellular location is the cytoplasm. It carries out the reaction IMP + L-aspartate + GTP = N(6)-(1,2-dicarboxyethyl)-AMP + GDP + phosphate + 2 H(+). Its pathway is purine metabolism; AMP biosynthesis via de novo pathway; AMP from IMP: step 1/2. Plays an important role in the de novo pathway of purine nucleotide biosynthesis. Catalyzes the first committed step in the biosynthesis of AMP from IMP. The sequence is that of Adenylosuccinate synthetase from Syntrophus aciditrophicus (strain SB).